The following is a 612-amino-acid chain: Peroxisomal carnitine O-octanoyltransferase (612 aa).

An N-acetylmethionine modification is found at Met1. N6-succinyllysine occurs at positions 40 and 57. His327 (proton acceptor) is an active-site residue. Residues Lys406 and 410 to 417 contribute to the CoA site; that span reads KNKMLHPD. Lys406 carries the N6-acetyllysine; alternate modification. Lys406 is modified (N6-succinyllysine; alternate). Residues Tyr439, Thr441, and Thr452 each coordinate (R)-carnitine. The short motif at 610-612 is the Microbody targeting signal element; that stretch reads THL.

It belongs to the carnitine/choline acetyltransferase family. Monomer.

The protein resides in the peroxisome. It catalyses the reaction octanoyl-CoA + (R)-carnitine = O-octanoyl-(R)-carnitine + CoA. It carries out the reaction 4,8-dimethylnonanoyl-CoA + (R)-carnitine = O-4,8-dimethylnonanoyl-(R)-carnitine + CoA. It functions in the pathway lipid metabolism; fatty acid beta-oxidation. In terms of biological role, beta-oxidation of fatty acids. The highest activity concerns the C6 to C10 chain length substrate. Converts the end product of pristanic acid beta oxidation, 4,8-dimethylnonanoyl-CoA, to its corresponding carnitine ester. This Homo sapiens (Human) protein is Peroxisomal carnitine O-octanoyltransferase (CROT).